The sequence spans 192 residues: Cytidylate kinase (192 aa).

7 to 15 (GPPGAGKST) is an ATP binding site.

Belongs to the cytidylate kinase family. Type 2 subfamily.

The protein resides in the cytoplasm. It catalyses the reaction CMP + ATP = CDP + ADP. The enzyme catalyses dCMP + ATP = dCDP + ADP. This Haloquadratum walsbyi (strain DSM 16790 / HBSQ001) protein is Cytidylate kinase.